The sequence spans 370 residues: MKTKLILLYGGKSAEHEVSLQTAFSVINALDLEKFEAAPIYITNEGEWIQGPLLSGKLDFVEQLRFSATDTIKLATTESEKSEGEAISPAVLEADGQETVVFPLLHGPNGEDGTVQGLFEVLNIPYVGNGVLASSAAMDKIVMKKIFADAGIPQVPAVAVRLIDWKNYQAEMVAEMEEVLTYPVFVKPANLGSSVGISKATNKKELADAMTEAFLYDRRVVVEQGVVAREIEMGVLGNDTPVCSVPGEILPEGAVATFYDYKAKYQDNNTALIIPTEVDPEILEQMKEYAVQAFLGLDASGLVRADFFLTEDNQLFLNEVNTMPGFTPYSMYPLLWQETGLPYGALIERLVDLAKERHAAKNALKYKLED.

In terms of domain architecture, ATP-grasp spans 144-352 (KKIFADAGIP…YGALIERLVD (209 aa)). Position 177-232 (177-232 (EEVLTYPVFVKPANLGSSVGISKATNKKELADAMTEAFLYDRRVVVEQGVVAREIE)) interacts with ATP. The Mg(2+) site is built by Asp306, Glu319, and Asn321.

It belongs to the D-alanine--D-alanine ligase family. The cofactor is Mg(2+). It depends on Mn(2+) as a cofactor.

The protein resides in the cytoplasm. The enzyme catalyses 2 D-alanine + ATP = D-alanyl-D-alanine + ADP + phosphate + H(+). It functions in the pathway cell wall biogenesis; peptidoglycan biosynthesis. Its function is as follows. Cell wall formation. The polypeptide is D-alanine--D-alanine ligase (Listeria monocytogenes serotype 4b (strain F2365)).